The sequence spans 969 residues: Protein translocase subunit SecA (969 aa).

Residues Gln99, 117–121 (GEGKT), and Asp631 each bind ATP.

The protein belongs to the SecA family. In terms of assembly, monomer and homodimer. Part of the essential Sec protein translocation apparatus which comprises SecA, SecYEG and auxiliary proteins SecDF. Other proteins may also be involved.

The protein localises to the cell inner membrane. It is found in the cytoplasm. The enzyme catalyses ATP + H2O + cellular proteinSide 1 = ADP + phosphate + cellular proteinSide 2.. Functionally, part of the Sec protein translocase complex. Interacts with the SecYEG preprotein conducting channel. Has a central role in coupling the hydrolysis of ATP to the transfer of proteins into and across the cell membrane, serving as an ATP-driven molecular motor driving the stepwise translocation of polypeptide chains across the membrane. This chain is Protein translocase subunit SecA, found in Chlamydia felis (strain Fe/C-56) (Chlamydophila felis).